Here is a 204-residue protein sequence, read N- to C-terminus: Methylthioribulose-1-phosphate dehydratase (204 aa).

Zn(2+)-binding residues include His-94 and His-96.

It belongs to the aldolase class II family. MtnB subfamily. Zn(2+) is required as a cofactor.

It carries out the reaction 5-(methylsulfanyl)-D-ribulose 1-phosphate = 5-methylsulfanyl-2,3-dioxopentyl phosphate + H2O. It functions in the pathway amino-acid biosynthesis; L-methionine biosynthesis via salvage pathway; L-methionine from S-methyl-5-thio-alpha-D-ribose 1-phosphate: step 2/6. Functionally, catalyzes the dehydration of methylthioribulose-1-phosphate (MTRu-1-P) into 2,3-diketo-5-methylthiopentyl-1-phosphate (DK-MTP-1-P). The chain is Methylthioribulose-1-phosphate dehydratase from Enterobacter sp. (strain 638).